Consider the following 195-residue polypeptide: CASP-like protein 1B1 (195 aa).

Residues 1–25 (MDLEKGKKPSEQAAACRIMQVKDKL) are Cytoplasmic-facing. A helical membrane pass occupies residues 26–46 (ITLQPVVRACVFLATAVAAVI). The Extracellular segment spans residues 47-78 (MGLNKQSYTTVVAIVGTRPVTQTFTAKFKDTP). The chain crosses the membrane as a helical span at residues 79 to 99 (AFVFFVIANAIASGYNLMVLV). The Cytoplasmic segment spans residues 100–114 (TRRILQRRAQSLSVH). The helical transmembrane segment at 115-135 (LLDMVILTLLATGSATAASMA) threads the bilayer. The Extracellular portion of the chain corresponds to 136 to 160 (QLGKNGNLHARWNPICDKFGSFCNH). A helical transmembrane segment spans residues 161-181 (GGIALMSSFIGVALMLALNLL). The Cytoplasmic portion of the chain corresponds to 182–195 (SAAANSPRSNVTGQ).

This sequence belongs to the Casparian strip membrane proteins (CASP) family. As to quaternary structure, homodimer and heterodimers.

It is found in the cell membrane. The sequence is that of CASP-like protein 1B1 from Oryza sativa subsp. indica (Rice).